A 105-amino-acid polypeptide reads, in one-letter code: Pyrimidine/purine nucleoside phosphorylase (105 aa).

This sequence belongs to the nucleoside phosphorylase PpnP family.

The enzyme catalyses a purine D-ribonucleoside + phosphate = a purine nucleobase + alpha-D-ribose 1-phosphate. It catalyses the reaction adenosine + phosphate = alpha-D-ribose 1-phosphate + adenine. The catalysed reaction is cytidine + phosphate = cytosine + alpha-D-ribose 1-phosphate. It carries out the reaction guanosine + phosphate = alpha-D-ribose 1-phosphate + guanine. The enzyme catalyses inosine + phosphate = alpha-D-ribose 1-phosphate + hypoxanthine. It catalyses the reaction thymidine + phosphate = 2-deoxy-alpha-D-ribose 1-phosphate + thymine. The catalysed reaction is uridine + phosphate = alpha-D-ribose 1-phosphate + uracil. It carries out the reaction xanthosine + phosphate = alpha-D-ribose 1-phosphate + xanthine. Its function is as follows. Catalyzes the phosphorolysis of diverse nucleosides, yielding D-ribose 1-phosphate and the respective free bases. Can use uridine, adenosine, guanosine, cytidine, thymidine, inosine and xanthosine as substrates. Also catalyzes the reverse reactions. The sequence is that of Pyrimidine/purine nucleoside phosphorylase from Ralstonia pickettii (strain 12J).